A 270-amino-acid chain; its full sequence is Glutamate racemase (270 aa).

Residues 14–15 (DS) and 46–47 (YG) each bind substrate. Catalysis depends on C77, which acts as the Proton donor/acceptor. 78–79 (NT) contributes to the substrate binding site. C189 acts as the Proton donor/acceptor in catalysis. 190–191 (TH) serves as a coordination point for substrate.

Belongs to the aspartate/glutamate racemases family.

It carries out the reaction L-glutamate = D-glutamate. It functions in the pathway cell wall biogenesis; peptidoglycan biosynthesis. Its function is as follows. Provides the (R)-glutamate required for cell wall biosynthesis. This is Glutamate racemase from Neisseria meningitidis serogroup C.